Reading from the N-terminus, the 596-residue chain is Aspartate--tRNA(Asp/Asn) ligase (596 aa).

L-aspartate is bound at residue glutamate 175. The tract at residues 199-202 (QQYK) is aspartate. The L-aspartate site is built by arginine 221 and histidine 454. 221–223 (RDE) provides a ligand contact to ATP. Glutamate 488 contacts ATP. Arginine 495 serves as a coordination point for L-aspartate. 540 to 543 (GVDR) provides a ligand contact to ATP.

This sequence belongs to the class-II aminoacyl-tRNA synthetase family. Type 1 subfamily. Homodimer.

The protein resides in the cytoplasm. The enzyme catalyses tRNA(Asx) + L-aspartate + ATP = L-aspartyl-tRNA(Asx) + AMP + diphosphate. Functionally, aspartyl-tRNA synthetase with relaxed tRNA specificity since it is able to aspartylate not only its cognate tRNA(Asp) but also tRNA(Asn). Reaction proceeds in two steps: L-aspartate is first activated by ATP to form Asp-AMP and then transferred to the acceptor end of tRNA(Asp/Asn). The protein is Aspartate--tRNA(Asp/Asn) ligase of Bartonella bacilliformis (strain ATCC 35685 / KC583 / Herrer 020/F12,63).